A 513-amino-acid chain; its full sequence is ATP synthase subunit alpha (513 aa).

169-176 is a binding site for ATP; it reads GDRQTGKT.

Belongs to the ATPase alpha/beta chains family. As to quaternary structure, F-type ATPases have 2 components, CF(1) - the catalytic core - and CF(0) - the membrane proton channel. CF(1) has five subunits: alpha(3), beta(3), gamma(1), delta(1), epsilon(1). CF(0) has three main subunits: a(1), b(2) and c(9-12). The alpha and beta chains form an alternating ring which encloses part of the gamma chain. CF(1) is attached to CF(0) by a central stalk formed by the gamma and epsilon chains, while a peripheral stalk is formed by the delta and b chains.

Its subcellular location is the cell inner membrane. The catalysed reaction is ATP + H2O + 4 H(+)(in) = ADP + phosphate + 5 H(+)(out). Functionally, produces ATP from ADP in the presence of a proton gradient across the membrane. The alpha chain is a regulatory subunit. The polypeptide is ATP synthase subunit alpha (Salmonella arizonae (strain ATCC BAA-731 / CDC346-86 / RSK2980)).